The following is a 227-amino-acid chain: ATP-dependent dethiobiotin synthetase BioD (227 aa).

12–17 is an ATP binding site; the sequence is DVGKTV. Threonine 16 is a Mg(2+) binding site. Lysine 37 is an active-site residue. Threonine 41 lines the substrate pocket. Residues aspartate 50, 110-113, 171-172, and 201-203 each bind ATP; these read EGAG, GS, and PAG. Residues aspartate 50 and glutamate 110 each contribute to the Mg(2+) site.

Belongs to the dethiobiotin synthetase family. Homodimer. The cofactor is Mg(2+).

Its subcellular location is the cytoplasm. The catalysed reaction is (7R,8S)-7,8-diammoniononanoate + CO2 + ATP = (4R,5S)-dethiobiotin + ADP + phosphate + 3 H(+). It participates in cofactor biosynthesis; biotin biosynthesis; biotin from 7,8-diaminononanoate: step 1/2. Catalyzes a mechanistically unusual reaction, the ATP-dependent insertion of CO2 between the N7 and N8 nitrogen atoms of 7,8-diaminopelargonic acid (DAPA, also called 7,8-diammoniononanoate) to form a ureido ring. The protein is ATP-dependent dethiobiotin synthetase BioD of Rhodococcus erythropolis (strain PR4 / NBRC 100887).